The following is a 216-amino-acid chain: Somatotropin (216 aa).

Residues 1 to 25 (MAPGSWFSPLLIAVVTLGLPQEAAA) form the signal peptide. His45 contributes to the Zn(2+) binding site. An intrachain disulfide couples Cys78 to Cys189. A Zn(2+)-binding site is contributed by Glu198. Cysteines 206 and 214 form a disulfide.

It belongs to the somatotropin/prolactin family.

The protein resides in the secreted. In terms of biological role, growth hormone plays an important role in growth control. The sequence is that of Somatotropin (GH) from Gallus gallus (Chicken).